We begin with the raw amino-acid sequence, 363 residues long: Protein RecA (363 aa).

78–85 serves as a coordination point for ATP; that stretch reads GPESGGKT.

The protein belongs to the RecA family.

The protein resides in the cytoplasm. In terms of biological role, can catalyze the hydrolysis of ATP in the presence of single-stranded DNA, the ATP-dependent uptake of single-stranded DNA by duplex DNA, and the ATP-dependent hybridization of homologous single-stranded DNAs. It interacts with LexA causing its activation and leading to its autocatalytic cleavage. Probably involved in base excision repair. Its function is as follows. Following severe irradiation (7 kGy of gamma irradiation) genomic DNA is fragmented. DNA is progressively degraded for the first 1.5 hours after IR, in a step promoted by RecA and counterbalanced by DNA Pol I and Pol III, followed by massive DNA synthesis and genome reassembly in the next hour. Optimal priming of DNA synthesis requires both RecA and RadA, Pol III initiates DNA synthesis while both Pol I and Pol III are required for its continuation. In the absence of RecA the majority of the chromosome is still reconstituted, via either single-strand annealing or non-homologous end joining. This chain is Protein RecA, found in Deinococcus radiodurans (strain ATCC 13939 / DSM 20539 / JCM 16871 / CCUG 27074 / LMG 4051 / NBRC 15346 / NCIMB 9279 / VKM B-1422 / R1).